We begin with the raw amino-acid sequence, 374 residues long: Phosphate-binding protein PstS1 (374 aa).

The N-terminal stretch at 1–23 (MKIRLHTLLAVLTAAPLLLAAAG) is a signal peptide. The N-palmitoyl cysteine moiety is linked to residue C24. Residue C24 is the site of S-diacylglycerol cysteine attachment. The disordered stretch occupies residues 25-48 (GSKPPSGSPETGAGAGTVATTPAS). Phosphate-binding positions include 58-60 (STL), S88, D106, and 189-191 (SGD).

The protein belongs to the PstS family. As to quaternary structure, the complex is composed of two ATP-binding proteins (PstB), two transmembrane proteins (PstC and PstA) and a solute-binding protein (PstS).

The protein localises to the cell membrane. The protein resides in the secreted. Functionally, functions in inorganic phosphate uptake, a phosphate-binding protein, although probably not the main uptake protein under phosphate starvation. Part of the ABC transporter complex PstSACB involved in phosphate import. In terms of biological role, a host TLR2 agonist (toll-like receptor), requires both host TLR1 and TLR2 as coreceptors. This is Phosphate-binding protein PstS1 (pstS1) from Mycobacterium bovis (strain BCG / Pasteur 1173P2).